The primary structure comprises 364 residues: tRNA 2-selenouridine synthase (364 aa).

Residues 14-137 form the Rhodanese domain; sequence LLADTPLIDV…LRQTAIQATW (124 aa). Cys-97 (S-selanylcysteine intermediate) is an active-site residue.

The protein belongs to the SelU family. In terms of assembly, monomer.

The enzyme catalyses 5-methylaminomethyl-2-thiouridine(34) in tRNA + selenophosphate + (2E)-geranyl diphosphate + H2O + H(+) = 5-methylaminomethyl-2-selenouridine(34) in tRNA + (2E)-thiogeraniol + phosphate + diphosphate. The catalysed reaction is 5-methylaminomethyl-2-thiouridine(34) in tRNA + (2E)-geranyl diphosphate = 5-methylaminomethyl-S-(2E)-geranyl-thiouridine(34) in tRNA + diphosphate. It catalyses the reaction 5-methylaminomethyl-S-(2E)-geranyl-thiouridine(34) in tRNA + selenophosphate + H(+) = 5-methylaminomethyl-2-(Se-phospho)selenouridine(34) in tRNA + (2E)-thiogeraniol. It carries out the reaction 5-methylaminomethyl-2-(Se-phospho)selenouridine(34) in tRNA + H2O = 5-methylaminomethyl-2-selenouridine(34) in tRNA + phosphate. Involved in the post-transcriptional modification of the uridine at the wobble position (U34) of tRNA(Lys), tRNA(Glu) and tRNA(Gln). Catalyzes the conversion of 2-thiouridine (S2U-RNA) to 2-selenouridine (Se2U-RNA). Acts in a two-step process involving geranylation of 2-thiouridine (S2U) to S-geranyl-2-thiouridine (geS2U) and subsequent selenation of the latter derivative to 2-selenouridine (Se2U) in the tRNA chain. The sequence is that of tRNA 2-selenouridine synthase from Salmonella gallinarum (strain 287/91 / NCTC 13346).